Consider the following 563-residue polypeptide: ATP-dependent RNA helicase DeaD (563 aa).

The Q motif signature appears at 13–41 (ATFADLQIHPRVLRAIGDVGYESPTAIQA). The Helicase ATP-binding domain maps to 44 to 215 (IPALMAGSDV…AKYLHDPFEV (172 aa)). ATP is bound at residue 57–64 (AQTGTGKT). The short motif at 163-166 (DEAD) is the DEAD box element. A Helicase C-terminal domain is found at 226-385 (NISQSYIQVA…AQLPTVEDVN (160 aa)). 2 disordered regions span residues 441–470 (LMAP…PDLT) and 543–563 (YRPP…KHVG). Basic and acidic residues predominate over residues 451 to 461 (RNRDQRRDRPQ). Positions 551–563 (RHNGGKPRRKHVG) are enriched in basic residues.

Belongs to the DEAD box helicase family. DeaD/CsdA subfamily.

The protein localises to the cytoplasm. The enzyme catalyses ATP + H2O = ADP + phosphate + H(+). Its function is as follows. DEAD-box RNA helicase involved in various cellular processes at low temperature, including ribosome biogenesis, mRNA degradation and translation initiation. The polypeptide is ATP-dependent RNA helicase DeaD (Mycobacterium tuberculosis (strain CDC 1551 / Oshkosh)).